Reading from the N-terminus, the 172-residue chain is 3-hydroxydecanoyl-[acyl-carrier-protein] dehydratase (172 aa).

Residue H71 is part of the active site.

It belongs to the thioester dehydratase family. FabA subfamily. In terms of assembly, homodimer.

Its subcellular location is the cytoplasm. The catalysed reaction is a (3R)-hydroxyacyl-[ACP] = a (2E)-enoyl-[ACP] + H2O. The enzyme catalyses (3R)-hydroxydecanoyl-[ACP] = (2E)-decenoyl-[ACP] + H2O. It carries out the reaction (2E)-decenoyl-[ACP] = (3Z)-decenoyl-[ACP]. Its pathway is lipid metabolism; fatty acid biosynthesis. Functionally, necessary for the introduction of cis unsaturation into fatty acids. Catalyzes the dehydration of (3R)-3-hydroxydecanoyl-ACP to E-(2)-decenoyl-ACP and then its isomerization to Z-(3)-decenoyl-ACP. Can catalyze the dehydratase reaction for beta-hydroxyacyl-ACPs with saturated chain lengths up to 16:0, being most active on intermediate chain length. This chain is 3-hydroxydecanoyl-[acyl-carrier-protein] dehydratase, found in Yersinia pseudotuberculosis serotype O:1b (strain IP 31758).